The following is a 458-amino-acid chain: Transmembrane protein 143 (458 aa).

The next 2 membrane-spanning stretches (helical) occupy residues 277 to 297 and 298 to 318; these read LLNLMLVVSGVMIFVNVGMVI and LSDLKMATSLLLLLFAAFMGV. Ser-329 is subject to Phosphoserine.

Its subcellular location is the membrane. This Mus musculus (Mouse) protein is Transmembrane protein 143 (Tmem143).